The following is a 325-amino-acid chain: Melanocortin receptor 5 (325 aa).

The Extracellular portion of the chain corresponds to 1–37; sequence MNSSFHLHFLDLNLNATEGNLSGPNVKNKSSPCEDMG. N2, N15, N20, and N28 each carry an N-linked (GlcNAc...) asparagine glycan. The helical transmembrane segment at 38 to 61 threads the bilayer; the sequence is IAVEVFLTLGVISLLENILVIGAI. Over 62–73 the chain is Cytoplasmic; the sequence is VKNKNLHSPMYF. Residues 74–97 form a helical membrane-spanning segment; the sequence is FVCSLAVADMLVSMSSAWETITIY. The Extracellular portion of the chain corresponds to 98 to 114; it reads LLNNKHLVIADAFVRHI. The chain crosses the membrane as a helical span at residues 115 to 138; the sequence is DNVFDSMICISVVASMCSLLAIAV. Residues 139–155 lie on the Cytoplasmic side of the membrane; that stretch reads DRYVTIFYALRYHHIMT. Residues 156–179 form a helical membrane-spanning segment; it reads ARRSGAIIAGIWAFCTGCGIVFIL. Residues 180 to 186 lie on the Extracellular side of the membrane; sequence YSESTYV. Residues 187 to 211 form a helical membrane-spanning segment; the sequence is ILCLISMFFAMLFLLVSLYIHMFLL. At 212-239 the chain is on the cytoplasmic side; the sequence is ARTHVKRIAALPRASSARQRTSMQGAVT. A helical transmembrane segment spans residues 240 to 265; sequence VTMLLGVFTVCWAPFFLHLTLMLSCP. Residues 266–273 are Extracellular-facing; that stretch reads QNLYCSCF. Residues 274–297 traverse the membrane as a helical segment; the sequence is MSHFNMYLILIMCNSVMDPLIYAF. The Cytoplasmic segment spans residues 298–325; the sequence is RSQEMRKTFKEIICCRGFRIACSFPRRD. Residues C311 and C312 are each lipidated (S-palmitoyl cysteine).

The protein belongs to the G-protein coupled receptor 1 family.

It is found in the cell membrane. Functionally, receptor for MSH (alpha, beta and gamma) and ACTH. The activity of this receptor is mediated by G proteins which activate adenylate cyclase. This receptor is a possible mediator of the immunomodulation properties of melanocortins. The polypeptide is Melanocortin receptor 5 (MC5R) (Pan troglodytes (Chimpanzee)).